The sequence spans 568 residues: PCNA-interacting partner (568 aa).

Residues 442–555 (QIPTCVHPAP…RNNKAVSKKL (114 aa)) form a disordered region. Over residues 488-500 (NAWNQTGGKSTQP) the composition is skewed to polar residues. Residues 515 to 527 (ANRECTEQGREEN) are compositionally biased toward basic and acidic residues.

The protein belongs to the PARI family.

Its subcellular location is the cytoplasm. It is found in the nucleus. In terms of biological role, required to suppress inappropriate homologous recombination, thereby playing a central role DNA repair and in the maintenance of genomic stability. The sequence is that of PCNA-interacting partner (parpbp) from Danio rerio (Zebrafish).